The chain runs to 290 residues: Undecaprenyl-diphosphatase (290 aa).

The next 8 membrane-spanning stretches (helical) occupy residues 1–21 (MALW…FLPV), 49–69 (MILF…VVFW), 101–121 (LFWL…TLKA), 126–146 (VFAS…LLWW), 160–180 (INLK…MPGL), 203–223 (YSFF…AIEV), 232–252 (VGFS…IISL), and 266–286 (VFSF…IDLA).

This sequence belongs to the UppP family.

The protein resides in the cell inner membrane. It catalyses the reaction di-trans,octa-cis-undecaprenyl diphosphate + H2O = di-trans,octa-cis-undecaprenyl phosphate + phosphate + H(+). Functionally, catalyzes the dephosphorylation of undecaprenyl diphosphate (UPP). Confers resistance to bacitracin. The protein is Undecaprenyl-diphosphatase of Alkalilimnicola ehrlichii (strain ATCC BAA-1101 / DSM 17681 / MLHE-1).